Consider the following 142-residue polypeptide: Large ribosomal subunit protein uL13c (142 aa).

It belongs to the universal ribosomal protein uL13 family. As to quaternary structure, part of the 50S ribosomal subunit.

The protein localises to the plastid. Its subcellular location is the chloroplast. In Porphyra purpurea (Red seaweed), this protein is Large ribosomal subunit protein uL13c.